We begin with the raw amino-acid sequence, 257 residues long: uncharacterized protein (257 aa).

The N-terminal stretch at 1–22 (MIHSRKLRLWLYLVLLAVFIGA) is a signal peptide. The N-palmitoyl cysteine moiety is linked to residue C23. The S-diacylglycerol cysteine moiety is linked to residue C23.

It belongs to the staphylococcal tandem lipoprotein family.

It is found in the cell membrane. This is an uncharacterized protein from Staphylococcus aureus (strain Mu50 / ATCC 700699).